Consider the following 447-residue polypeptide: Argininosuccinate synthase (447 aa).

ATP-binding positions include 17–25 (AFSGGLDTS) and Ala-43. Residue Tyr-99 coordinates L-citrulline. ATP-binding residues include Gly-129 and Thr-131. L-aspartate-binding residues include Thr-131, Asn-135, and Asp-136. Asn-135 contributes to the L-citrulline binding site. Asp-136 provides a ligand contact to ATP. Arg-139 and Ser-192 together coordinate L-citrulline. Residue Asp-194 participates in ATP binding. 3 residues coordinate L-citrulline: Thr-201, Glu-203, and Glu-280.

The protein belongs to the argininosuccinate synthase family. Type 2 subfamily. Homotetramer.

The protein resides in the cytoplasm. It carries out the reaction L-citrulline + L-aspartate + ATP = 2-(N(omega)-L-arginino)succinate + AMP + diphosphate + H(+). Its pathway is amino-acid biosynthesis; L-arginine biosynthesis; L-arginine from L-ornithine and carbamoyl phosphate: step 2/3. In Citrobacter koseri (strain ATCC BAA-895 / CDC 4225-83 / SGSC4696), this protein is Argininosuccinate synthase.